The primary structure comprises 147 residues: MKALIILGFLFLSVAVQGKVFERCELARTLKKLGLDGYKGVSLANWLCLTKWESSYNTKATNYNPSSESTDYGIFQINSKWWCNDGKTPNAVDGCHVSCSELMENDIAKAVACAKHIVSEQGITAWVAWKSHCRDHDVSSYVQGCTL.

Positions 1–18 are cleaved as a signal peptide; sequence MKALIILGFLFLSVAVQG. The region spanning 19–147 is the C-type lysozyme domain; sequence KVFERCELAR…VSSYVQGCTL (129 aa). 4 cysteine pairs are disulfide-bonded: Cys-24–Cys-145, Cys-48–Cys-133, Cys-83–Cys-99, and Cys-95–Cys-113. Catalysis depends on residues Glu-53 and Asp-71.

The protein belongs to the glycosyl hydrolase 22 family. As to quaternary structure, monomer. As to expression, stomach-specific.

It catalyses the reaction Hydrolysis of (1-&gt;4)-beta-linkages between N-acetylmuramic acid and N-acetyl-D-glucosamine residues in a peptidoglycan and between N-acetyl-D-glucosamine residues in chitodextrins.. Its function is as follows. Lysozymes have primarily a bacteriolytic function; those in tissues and body fluids are associated with the monocyte-macrophage system and enhance the activity of immunoagents. In Bos taurus (Bovine), this protein is Lysozyme C-3 (LYZ3).